Here is a 277-residue protein sequence, read N- to C-terminus: Shikimate dehydrogenase (NADP(+)) (277 aa).

Residues 15 to 17 (SLS) and threonine 62 contribute to the shikimate site. Residue lysine 66 is the Proton acceptor of the active site. Shikimate contacts are provided by asparagine 87 and aspartate 102. Residues 127–131 (GAGGA) and isoleucine 219 each bind NADP(+). Tyrosine 221 contributes to the shikimate binding site. Glycine 242 is a binding site for NADP(+).

It belongs to the shikimate dehydrogenase family. In terms of assembly, homodimer.

It catalyses the reaction shikimate + NADP(+) = 3-dehydroshikimate + NADPH + H(+). It participates in metabolic intermediate biosynthesis; chorismate biosynthesis; chorismate from D-erythrose 4-phosphate and phosphoenolpyruvate: step 4/7. Involved in the biosynthesis of the chorismate, which leads to the biosynthesis of aromatic amino acids. Catalyzes the reversible NADPH linked reduction of 3-dehydroshikimate (DHSA) to yield shikimate (SA). This chain is Shikimate dehydrogenase (NADP(+)), found in Bacillus cytotoxicus (strain DSM 22905 / CIP 110041 / 391-98 / NVH 391-98).